A 343-amino-acid chain; its full sequence is Retroviral-like aspartic protease 1 (343 aa).

Topologically, residues 1–55 are cytoplasmic; that stretch reads MGSPGASLGIKKALQSEQATALPASAPAVSQPTAPAPSCLPKAGQVIPTLLREAP. A propeptide spanning residues 1–190 is cleaved from the precursor; the sequence is MGSPGASLGI…HLPKEIVFAN (190 aa). A helical transmembrane segment spans residues 56–76; that stretch reads FSSVIAPTLLCGFLFLAWVAA. The Extracellular segment spans residues 77 to 343; it reads EVPEESSRMA…SEEGRQELSH (267 aa). One can recognise a Peptidase A2 domain in the interval 207 to 288; sequence VRFLVDSGAQ…AEEAIIGTDV (82 aa). Aspartate 212 is an active-site residue. Asparagine 276 is a glycosylation site (N-linked (GlcNAc...) asparagine). A propeptide spanning residues 327–343 is cleaved from the precursor; sequence LIEEDPSSEEGRQELSH.

Homodimer. In terms of processing, undergoes autocleavage which is necessary for activation of the protein. As to expression, expressed primarily in the granular layer of the epidermis and inner root sheath of hair follicles. In psoriatic skin, expressed throughout the stratum corneum. In ulcerated skin, expressed in the stratum granulosum of intact epidermis but almost absent from ulcerated regions. Expressed in differentiated areas of squamous cell carcinomas but not in undifferentiated tumors.

The protein localises to the membrane. Functionally, protease responsible for filaggrin processing, essential for the maintenance of a proper epidermis organization. The chain is Retroviral-like aspartic protease 1 from Homo sapiens (Human).